Reading from the N-terminus, the 306-residue chain is Ornithine carbamoyltransferase (306 aa).

Carbamoyl phosphate contacts are provided by residues 46–49 (STRT), Gln73, Arg97, and 124–127 (HPTQ). L-ornithine is bound by residues Asn156, Asp220, and 224–225 (SM). Carbamoyl phosphate-binding positions include 260-261 (CL) and Arg288.

It belongs to the aspartate/ornithine carbamoyltransferase superfamily. OTCase family.

It localises to the cytoplasm. The catalysed reaction is carbamoyl phosphate + L-ornithine = L-citrulline + phosphate + H(+). It functions in the pathway amino-acid degradation; L-arginine degradation via ADI pathway; carbamoyl phosphate from L-arginine: step 2/2. In terms of biological role, reversibly catalyzes the transfer of the carbamoyl group from carbamoyl phosphate (CP) to the N(epsilon) atom of ornithine (ORN) to produce L-citrulline. This chain is Ornithine carbamoyltransferase, found in Campylobacter jejuni subsp. jejuni serotype O:6 (strain 81116 / NCTC 11828).